The following is a 155-amino-acid chain: Ribosome maturation factor RimP (155 aa).

The protein belongs to the RimP family.

It is found in the cytoplasm. Its function is as follows. Required for maturation of 30S ribosomal subunits. In Staphylococcus haemolyticus (strain JCSC1435), this protein is Ribosome maturation factor RimP.